The sequence spans 295 residues: Mediator of RNA polymerase II transcription subunit 6 (295 aa).

Residues 211-243 (TATAATNGNNAGGGSNKSSVRPTGGANMATVPS) are disordered. Phosphoserine is present on S225.

This sequence belongs to the Mediator complex subunit 6 family. As to quaternary structure, component of the Mediator complex, which is composed of at least 21 subunits that form three structurally distinct submodules. The Mediator head module contains MED6, MED8, MED11, SRB4/MED17, SRB5/MED18, ROX3/MED19, SRB2/MED20 and SRB6/MED22, the middle module contains MED1, MED4, NUT1/MED5, MED7, CSE2/MED9, NUT2/MED10, SRB7/MED21 and SOH1/MED31, and the tail module contains MED2, PGD1/MED3, RGR1/MED14, GAL11/MED15 and SIN4/MED16. The head and the middle modules interact directly with RNA polymerase II, whereas the elongated tail module interacts with gene-specific regulatory proteins. MED6 interacts directly with SRB4/MED17 and SRB7/MED21.

Its subcellular location is the nucleus. Component of the Mediator complex, a coactivator involved in the regulated transcription of nearly all RNA polymerase II-dependent genes. Mediator functions as a bridge to convey information from gene-specific regulatory proteins to the basal RNA polymerase II transcription machinery. The Mediator complex, having a compact conformation in its free form, is recruited to promoters by direct interactions with regulatory proteins and serves for the assembly of a functional preinitiation complex with RNA polymerase II and the general transcription factors. The Mediator complex unfolds to an extended conformation and partially surrounds RNA polymerase II, specifically interacting with the unphosphorylated form of the C-terminal domain (CTD) of RNA polymerase II. The Mediator complex dissociates from the RNA polymerase II holoenzyme and stays at the promoter when transcriptional elongation begins. In Saccharomyces cerevisiae (strain ATCC 204508 / S288c) (Baker's yeast), this protein is Mediator of RNA polymerase II transcription subunit 6 (MED6).